The following is a 180-amino-acid chain: Large ribosomal subunit protein uL6 (180 aa).

This sequence belongs to the universal ribosomal protein uL6 family. As to quaternary structure, part of the 50S ribosomal subunit.

In terms of biological role, this protein binds to the 23S rRNA, and is important in its secondary structure. It is located near the subunit interface in the base of the L7/L12 stalk, and near the tRNA binding site of the peptidyltransferase center. This chain is Large ribosomal subunit protein uL6, found in Anaeromyxobacter sp. (strain K).